We begin with the raw amino-acid sequence, 1043 residues long: Ras guanine nucleotide exchange factor S (1043 aa).

Residues 109–142 (IETLQTQRRQSTLNIQALQINNELQQQLQQQQQL) are a coiled coil. Low complexity-rich tracts occupy residues 135–145 (QLQQQQQLPPI), 245–258 (LSPL…GLSS), 266–281 (SKNQ…NSSS), and 293–307 (NNNN…SNSS). Disordered regions lie at residues 135–160 (QLQQ…TSTI) and 245–316 (LSPL…HQSQ). Residues 404–434 (LAVSLQNVEGLQNIAENLEDETLNLLDLVNE) adopt a coiled-coil conformation. The N-terminal Ras-GEF domain maps to 645–768 (KDGSILKVTL…LLRGLLDKMI (124 aa)). The region spanning 803 to 1043 (SAQSIAQQLT…YDLSIALEPK (241 aa)) is the Ras-GEF domain.

Promotes the exchange of Ras-bound GDP by GTP. This is Ras guanine nucleotide exchange factor S (gefS) from Dictyostelium discoideum (Social amoeba).